The chain runs to 1575 residues: Ras GTPase-activating-like protein IQGAP2 (1575 aa).

At Ser-16 the chain carries Phosphoserine. The 116-residue stretch at 41 to 156 folds into the Calponin-homology (CH) domain; it reads LCHLEEAKRW…YCIHALSLYL (116 aa). Residue Thr-356 is modified to Phosphothreonine. Residues 594 to 627 enclose the WW domain; the sequence is VSSDGSWLKLNLHKKYDYYYNTDSKESSWVTPES. 3 positions are modified to phosphoserine: Ser-595, Ser-599, and Ser-685. 3 consecutive IQ domains span residues 690–719, 720–749, and 750–779; these read QEEN…TFID, NTDS…YFRD, and HNNE…SENP. Thr-716 bears the Phosphothreonine mark. Residues Thr-782, Thr-881, Thr-1002, and Thr-1269 each carry the phosphothreonine modification. Residues 933–1182 form the Ras-GAP domain; the sequence is YLLLKLFKTA…QEFRKYFKEA (250 aa). Phosphoserine occurs at positions 1271, 1279, 1358, and 1461.

Isoform 2 expression is enhanced in testis.

Binds to activated CDC42 and RAC1 but does not seem to stimulate their GTPase activity. Associates with calmodulin. The sequence is that of Ras GTPase-activating-like protein IQGAP2 (IQGAP2) from Homo sapiens (Human).